We begin with the raw amino-acid sequence, 879 residues long: Leucine--tRNA ligase (879 aa).

The 'HIGH' region signature appears at Pro-45–His-55. The 'KMSKS' region signature appears at Lys-637–Ser-641. Lys-640 is an ATP binding site.

It belongs to the class-I aminoacyl-tRNA synthetase family.

Its subcellular location is the cytoplasm. The catalysed reaction is tRNA(Leu) + L-leucine + ATP = L-leucyl-tRNA(Leu) + AMP + diphosphate. The chain is Leucine--tRNA ligase from Xylella fastidiosa (strain 9a5c).